The following is a 546-amino-acid chain: Zinc metalloproteinase nas-9 (546 aa).

Residues 1-14 (MIFLLFVVFPFVYA) form the signal peptide. Residues 15 to 300 (QLLPELLAGF…GGGGGGRVPR (286 aa)) constitute a propeptide that is removed on maturation. An N-linked (GlcNAc...) asparagine glycan is attached at Asn248. The region spanning 308 to 507 (SAVQKWDIWK…IRLLKKMYCR (200 aa)) is the Peptidase M12A domain. 5 cysteine pairs are disulfide-bonded: Cys347/Cys506, Cys372/Cys392, Cys510/Cys546, Cys517/Cys539, and Cys526/Cys543. A Zn(2+)-binding site is contributed by His401. Residue Glu402 is part of the active site. Zn(2+)-binding residues include His405 and His411. The ShKT domain occupies 510 to 546 (CDDQNVHCGTWALHGYCKMKEQMKWMNENCKASCDKC).

Zn(2+) is required as a cofactor. Expressed in hypodermis, uterus and spermatheca.

Its subcellular location is the secreted. In terms of biological role, metalloprotease. The chain is Zinc metalloproteinase nas-9 (nas-9) from Caenorhabditis elegans.